We begin with the raw amino-acid sequence, 180 residues long: UPF0227 protein PC1_2487 (180 aa).

The protein belongs to the UPF0227 family.

In Pectobacterium carotovorum subsp. carotovorum (strain PC1), this protein is UPF0227 protein PC1_2487.